The following is a 97-amino-acid chain: Insertion element IS2 uncharacterized 11.1 kDa protein (97 aa).

This is Insertion element IS2 uncharacterized 11.1 kDa protein from Escherichia coli.